A 107-amino-acid polypeptide reads, in one-letter code: Ig kappa chain V-VI region NQ2-48.2.2 (107 aa).

Residues 1 to 23 are framework-1; the sequence is QILLTQSPAIMSASPGQKVTMTC. Cys23 and Cys87 are oxidised to a cystine. Positions 24-33 are complementarity-determining-1; that stretch reads SASSSVSYMH. A framework-2 region spans residues 34 to 48; it reads WYQQKSGTSPKRWIY. Positions 49-55 are complementarity-determining-2; that stretch reads DTSKLAS. The tract at residues 56-87 is framework-3; the sequence is GVPARFSGSGSATSYSLTITSMQAEDAATYYC. Residues 88 to 96 form a complementarity-determining-3 region; that stretch reads QQWSSNPLT. Residues 97-106 form a framework-4 region; sequence FGAGTKLXLK.

Its function is as follows. Anti-2-phenyl oxazolone (PHOX) Antibody. This is Ig kappa chain V-VI region NQ2-48.2.2 from Mus musculus (Mouse).